Reading from the N-terminus, the 323-residue chain is Cyclin-dependent kinase 1 (323 aa).

The region spanning 4–306 (YQKIEKIGEG…AKQACMHPYF (303 aa)) is the Protein kinase domain. ATP contacts are provided by residues 10–18 (IGEGTYGVV) and Lys-34. Thr-14 carries the post-translational modification Phosphothreonine. Residue Tyr-15 is modified to Phosphotyrosine. The active-site Proton acceptor is the Asp-147. Thr-180 is subject to Phosphothreonine; by CAK.

Belongs to the protein kinase superfamily. CMGC Ser/Thr protein kinase family. CDC2/CDKX subfamily. In terms of assembly, forms a stable but non-covalent complex with a regulatory subunit (SUC1) and with a cyclin.

It catalyses the reaction L-seryl-[protein] + ATP = O-phospho-L-seryl-[protein] + ADP + H(+). The enzyme catalyses L-threonyl-[protein] + ATP = O-phospho-L-threonyl-[protein] + ADP + H(+). With respect to regulation, phosphorylation at Thr-14 or Tyr-15 inactivates the enzyme, while phosphorylation at Thr-180 activates it. Cyclin-dependent kinase that acts as a master regulator of the mitotic and meiotic cell cycles. This chain is Cyclin-dependent kinase 1, found in Emericella nidulans (strain FGSC A4 / ATCC 38163 / CBS 112.46 / NRRL 194 / M139) (Aspergillus nidulans).